The primary structure comprises 429 residues: C4-dicarboxylate transport protein (429 aa).

Helical transmembrane passes span 3–23 (LTIF…GVLL), 44–64 (LIKM…IAGM), 76–96 (IALL…LLIV), 142–162 (IGAF…LFGF), 184–204 (VIFG…FGAM), 222–242 (LIAC…GSIA), 326–346 (VIHQ…AAGV), and 352–372 (IVLA…LALI).

It belongs to the dicarboxylate/amino acid:cation symporter (DAACS) (TC 2.A.23) family.

Its subcellular location is the cell inner membrane. In terms of biological role, responsible for the transport of dicarboxylates such as succinate, fumarate, and malate from the periplasm across the membrane. The protein is C4-dicarboxylate transport protein of Serratia proteamaculans (strain 568).